Reading from the N-terminus, the 499-residue chain is Laccase (499 aa).

Plastocyanin-like domains are found at residues 2-127 (VGPV…FVVY) and 139-281 (VDND…ILRY). 2 N-linked (GlcNAc...) asparagine glycosylation sites follow: N51 and N54. Residues H64, H66, H109, and H111 each coordinate Cu cation. 2 disulfides stabilise this stretch: C85-C488 and C117-C205. 3'-nitrotyrosine is present on Y196. 4 N-linked (GlcNAc...) asparagine glycosylation sites follow: N208, N217, N292, and N333. Positions 348-470 (SVPVLLQILS…GGFAVVQAED (123 aa)) constitute a Plastocyanin-like 3 domain. 3'-nitrotyrosine is present on Y372. A glycan (N-linked (GlcNAc...) asparagine) is linked at N377. The Cu cation site is built by H395, H398, and H400. Residues N416 and N436 are each glycosylated (N-linked (GlcNAc...) asparagine). Cu cation is bound by residues H452, C453, H454, and H458.

It belongs to the multicopper oxidase family. Requires Cu cation as cofactor.

It is found in the secreted. The catalysed reaction is 4 hydroquinone + O2 = 4 benzosemiquinone + 2 H2O. In terms of biological role, lignin degradation and detoxification of lignin-derived products. In Trametes maxima (White-rot fungus), this protein is Laccase.